A 471-amino-acid chain; its full sequence is ATP synthase subunit beta (471 aa).

152-159 contributes to the ATP binding site; the sequence is GGAGVGKT.

This sequence belongs to the ATPase alpha/beta chains family. F-type ATPases have 2 components, CF(1) - the catalytic core - and CF(0) - the membrane proton channel. CF(1) has five subunits: alpha(3), beta(3), gamma(1), delta(1), epsilon(1). CF(0) has three main subunits: a(1), b(2) and c(9-12). The alpha and beta chains form an alternating ring which encloses part of the gamma chain. CF(1) is attached to CF(0) by a central stalk formed by the gamma and epsilon chains, while a peripheral stalk is formed by the delta and b chains.

It localises to the cell membrane. The catalysed reaction is ATP + H2O + 4 H(+)(in) = ADP + phosphate + 5 H(+)(out). In terms of biological role, produces ATP from ADP in the presence of a proton gradient across the membrane. The catalytic sites are hosted primarily by the beta subunits. The polypeptide is ATP synthase subunit beta (Herpetosiphon aurantiacus (Herpetosiphon giganteus)).